Consider the following 523-residue polypeptide: Translation initiation factor eIF2B subunit delta (523 aa).

The tract at residues 1 to 154 is disordered; that stretch reads MAAVAVAVRE…EHTQADDPTL (154 aa). Position 2 is an N-acetylalanine (Ala2). The residue at position 12 (Ser12) is a Phosphoserine. Over residues 31 to 40 the composition is skewed to basic and acidic residues; it reads MTQEEKLQLR. Over residues 41–51 the composition is skewed to basic residues; it reads KEKKQQKKKRK. The residue at position 85 (Thr85) is a Phosphothreonine. Over residues 95–120 the composition is skewed to basic and acidic residues; it reads TKAELRAERRAKQEAERALKQARKGE. The residue at position 129 (Ser129) is a Phosphoserine. Residues 170–179 are may bind the chemical integrated stress response (ISR) inhibitor ISRIB; it reads RKDYGSKVSL.

The protein belongs to the eIF-2B alpha/beta/delta subunits family. As to quaternary structure, component of the translation initiation factor 2B (eIF2B) complex which is a heterodecamer of two sets of five different subunits: alpha, beta, gamma, delta and epsilon. Subunits alpha, beta and delta comprise a regulatory subcomplex and subunits epsilon and gamma comprise a catalytic subcomplex. Within the complex, the hexameric regulatory complex resides at the center, with the two heterodimeric catalytic subcomplexes bound on opposite sides.

The protein resides in the cytoplasm. The protein localises to the cytosol. Activated by the chemical integrated stress response (ISR) inhibitor ISRIB which stimulates guanine nucleotide exchange factor activity for both phosphorylated and unphosphorylated eIF2. Functionally, acts as a component of the translation initiation factor 2B (eIF2B) complex, which catalyzes the exchange of GDP for GTP on eukaryotic initiation factor 2 (eIF2) gamma subunit. Its guanine nucleotide exchange factor activity is repressed when bound to eIF2 complex phosphorylated on the alpha subunit, thereby limiting the amount of methionyl-initiator methionine tRNA available to the ribosome and consequently global translation is repressed. This chain is Translation initiation factor eIF2B subunit delta (EIF2B4), found in Oryctolagus cuniculus (Rabbit).